The primary structure comprises 422 residues: 5'-deoxyadenosine deaminase (422 aa).

Zn(2+)-binding residues include His57 and His59. Positions 86 and 178 each coordinate substrate. His205 is a binding site for Zn(2+). The substrate site is built by Glu208 and Asp294. Asp294 lines the Zn(2+) pocket.

Belongs to the metallo-dependent hydrolases superfamily. MTA/SAH deaminase family. As to quaternary structure, homotetramer. Zn(2+) serves as cofactor.

The catalysed reaction is 5'-deoxyadenosine + H2O + H(+) = 5'-deoxyinosine + NH4(+). It catalyses the reaction S-adenosyl-L-homocysteine + H2O + H(+) = S-inosyl-L-homocysteine + NH4(+). It carries out the reaction S-methyl-5'-thioadenosine + H2O + H(+) = S-methyl-5'-thioinosine + NH4(+). The enzyme catalyses adenosine + H2O + H(+) = inosine + NH4(+). It functions in the pathway amino-acid biosynthesis; S-adenosyl-L-methionine biosynthesis. Functionally, catalyzes the deamination of three SAM-derived enzymatic products, namely 5'-deoxyadenosine, S-adenosyl-L-homocysteine, and 5'-methylthioadenosine, to produce the inosine analogs. Can also deaminate adenosine. The preferred substrate for this enzyme is 5'-deoxyadenosine, but all these substrates are efficiently deaminated. Likely functions in a S-adenosyl-L-methionine (SAM) recycling pathway from S-adenosyl-L-homocysteine (SAH) produced from SAM-dependent methylation reactions. May also be involved in the recycling of 5'-deoxyadenosine, whereupon the 5'-deoxyribose moiety of 5'-deoxyinosine is further metabolized to deoxyhexoses used for the biosynthesis of aromatic amino acids in methanogens. The protein is 5'-deoxyadenosine deaminase of Methanococcus maripaludis (strain C5 / ATCC BAA-1333).